A 437-amino-acid polypeptide reads, in one-letter code: GTPase Der (437 aa).

EngA-type G domains follow at residues 3–168 and 178–353; these read PLIA…PESE and VKLA…RNRS. GTP is bound by residues 9-16, 56-60, 120-123, 184-191, 231-235, and 296-299; these read GRPNVGKS, DTGGY, NKVE, DTAGL, and NKWD. The 84-residue stretch at 354–437 folds into the KH-like domain; it reads RKISTSSLNR…VPISLRFMEK (84 aa).

Belongs to the TRAFAC class TrmE-Era-EngA-EngB-Septin-like GTPase superfamily. EngA (Der) GTPase family. In terms of assembly, associates with the 50S ribosomal subunit.

Functionally, GTPase that plays an essential role in the late steps of ribosome biogenesis. The protein is GTPase Der of Chlorobium limicola (strain DSM 245 / NBRC 103803 / 6330).